Reading from the N-terminus, the 297-residue chain is Protease HtpX homolog (297 aa).

Helical transmembrane passes span 14–34 (IVLL…VGYL) and 38–58 (SLET…IIMV). His-144 is a binding site for Zn(2+). The active site involves Glu-145. Position 148 (His-148) interacts with Zn(2+). The next 2 helical transmembrane spans lie at 159 to 179 (IALA…NWWF) and 199 to 219 (ILLL…AAAI). Residue Glu-228 participates in Zn(2+) binding.

The protein belongs to the peptidase M48B family. It depends on Zn(2+) as a cofactor.

It is found in the cell membrane. The polypeptide is Protease HtpX homolog (Leuconostoc mesenteroides subsp. mesenteroides (strain ATCC 8293 / DSM 20343 / BCRC 11652 / CCM 1803 / JCM 6124 / NCDO 523 / NBRC 100496 / NCIMB 8023 / NCTC 12954 / NRRL B-1118 / 37Y)).